The chain runs to 232 residues: uncharacterized protein (232 aa).

7 helical membrane-spanning segments follow: residues 17 to 37 (FLAKVFGLMSIGLLISAVFAY), 54 to 74 (MSFMAMILIQFGLVYAISGAL), 84 to 104 (ALFLLYSALTGVTLSSIFMIY), 107 to 127 (GSIVFTFGITAGTFLGMSVYG), 138 to 158 (GSYLIMGLWGIIIASLVNMFF), 161 to 181 (SGLNFLISILGVVIFTGLTAY), and 203 to 223 (MAVVASLKLYLDFINLFLYLL).

The protein belongs to the BI1 family.

It is found in the cell membrane. This is an uncharacterized protein from Borreliella burgdorferi (strain ATCC 35210 / DSM 4680 / CIP 102532 / B31) (Borrelia burgdorferi).